The sequence spans 239 residues: tRNA (guanine-N(7)-)-methyltransferase (239 aa).

S-adenosyl-L-methionine is bound by residues glutamate 69, glutamate 94, aspartate 121, and aspartate 144. Residue aspartate 144 is part of the active site. Lysine 148 lines the substrate pocket. The interaction with RNA stretch occupies residues arginine 150–arginine 155. Substrate-binding positions include aspartate 180 and threonine 217–glutamate 220.

Belongs to the class I-like SAM-binding methyltransferase superfamily. TrmB family. Monomer.

It carries out the reaction guanosine(46) in tRNA + S-adenosyl-L-methionine = N(7)-methylguanosine(46) in tRNA + S-adenosyl-L-homocysteine. It functions in the pathway tRNA modification; N(7)-methylguanine-tRNA biosynthesis. In terms of biological role, catalyzes the formation of N(7)-methylguanine at position 46 (m7G46) in tRNA. The protein is tRNA (guanine-N(7)-)-methyltransferase of Salmonella typhimurium (strain LT2 / SGSC1412 / ATCC 700720).